A 338-amino-acid chain; its full sequence is uncharacterized protein (338 aa).

This is an uncharacterized protein from Acanthamoeba polyphaga (Amoeba).